The chain runs to 619 residues: Very-long-chain aldehyde decarbonylase GL1-4 (619 aa).

Transmembrane regions (helical) follow at residues 45–65, 94–114, 126–146, 178–198, and 325–345; these read IAFSLILPSLLLRMIHNQIWI, GWDDQILFNGLVFYAGYLAMP, GAVVTALVHTGPVEFLYYWFH, FAEHVVYFILFAIPILSTIYL, and AWYMWTLWPLAWLSMVLAWIY. The region spanning 138–272 is the Fatty acid hydroxylase domain; it reads VEFLYYWFHR…MPFYDYIYNT (135 aa).

Belongs to the sterol desaturase family. As to quaternary structure, homodimer. In terms of tissue distribution, expressed ubiquitously at low levels, with higher accumulation in developing panicles, shoots and flag leaves.

The protein resides in the endoplasmic reticulum membrane. It carries out the reaction a long-chain fatty aldehyde + 2 NADPH + O2 + H(+) = a long-chain alkane + formate + 2 NADP(+) + H2O. Its function is as follows. Aldehyde decarbonylase involved in the conversion of aldehydes to alkanes. Core component of a very-long-chain alkane synthesis complex. The chain is Very-long-chain aldehyde decarbonylase GL1-4 from Oryza sativa subsp. japonica (Rice).